We begin with the raw amino-acid sequence, 473 residues long: Thermostable beta-glucosidase B (473 aa).

Glutamate 196 functions as the Proton donor in the catalytic mechanism. The active-site Nucleophile is glutamate 378.

The protein belongs to the glycosyl hydrolase 1 family.

The protein localises to the cytoplasm. It catalyses the reaction Hydrolysis of terminal, non-reducing beta-D-glucosyl residues with release of beta-D-glucose.. This chain is Thermostable beta-glucosidase B (bglB), found in Thermobispora bispora (Microbispora bispora).